The following is a 229-amino-acid chain: Transmembrane emp24 domain-containing protein 5 (229 aa).

An N-terminal signal peptide occupies residues 1–27; that stretch reads MGGRMWLPFPVLLLSALPAALLRGAAG. Topologically, residues 28 to 196 are lumenal; that stretch reads FTPSLDSDFT…IQESNFDRVN (169 aa). One can recognise a GOLD domain in the interval 45 to 126; that stretch reads KECFYQPMPL…EKVIFFELIL (82 aa). Residues 197–217 traverse the membrane as a helical segment; sequence FWSVVNLMVMVVVSAIQVYTL. Residues 218-229 are Cytoplasmic-facing; that stretch reads KSLFEDKRKSRT.

The protein belongs to the EMP24/GP25L family. As to quaternary structure, interacts with TMED9 and TMED10.

The protein localises to the endoplasmic reticulum membrane. The protein resides in the golgi apparatus. It is found in the cis-Golgi network membrane. It localises to the endoplasmic reticulum-Golgi intermediate compartment membrane. Potential role in vesicular protein trafficking, mainly in the early secretory pathway. Required for the maintenance of the Golgi apparatus; involved in protein exchange between Golgi stacks during assembly. Probably not required for COPI-vesicle-mediated retrograde transport. This Mus musculus (Mouse) protein is Transmembrane emp24 domain-containing protein 5 (Tmed5).